The chain runs to 534 residues: NAD(P)H-quinone oxidoreductase chain 4 (534 aa).

14 consecutive transmembrane segments (helical) span residues 12–32 (FPWL…IPFF), 44–64 (FALS…INGF), 96–116 (MPLI…AWPV), 120–140 (PKLF…VFAV), 144–164 (LLFF…LAIW), 176–196 (FIIY…AMGF), 220–240 (ILCY…VPLH), 251–271 (TAPV…YALL), 285–305 (FAPL…LTSF), 314–334 (IAYS…SFSS), 340–360 (AMLQ…LVGA), 384–404 (FALW…SGFV), 425–445 (VVMA…LLSM), and 472–492 (VYII…PRLV).

The protein belongs to the complex I subunit 4 family.

It localises to the cellular thylakoid membrane. It carries out the reaction a plastoquinone + NADH + (n+1) H(+)(in) = a plastoquinol + NAD(+) + n H(+)(out). The enzyme catalyses a plastoquinone + NADPH + (n+1) H(+)(in) = a plastoquinol + NADP(+) + n H(+)(out). Functionally, NDH-1 shuttles electrons from NAD(P)H, via FMN and iron-sulfur (Fe-S) centers, to quinones in the respiratory chain. The immediate electron acceptor for the enzyme in this species is believed to be plastoquinone. Couples the redox reaction to proton translocation (for every two electrons transferred, four hydrogen ions are translocated across the cytoplasmic membrane), and thus conserves the redox energy in a proton gradient. In Prochlorococcus marinus (strain AS9601), this protein is NAD(P)H-quinone oxidoreductase chain 4.